Here is a 375-residue protein sequence, read N- to C-terminus: E3 ubiquitin-protein ligase RNF34 (375 aa).

An FYVE-type zinc finger spans residues 56-107 (EGPNIVCKACGLSFSVFRKKHVCCDCKKDFCSVCSVLQENLRRCSTCHLLQE). The region spanning 115-134 (LMRLKVKDLRQYLILRNIPI) is the SAP 1 domain. A Phosphoserine modification is found at S169. The disordered stretch occupies residues 202-250 (RTLGSGALAQEPSEIASANTEDDEDDDDDDDDDDDDDEENLEDRTPGLT). The span at 221 to 242 (TEDDEDDDDDDDDDDDDDEENL) shows a compositional bias: acidic residues. S257 and S259 each carry phosphoserine. Residues 267–281 (VEGMSVRQLKEILAR) form the SAP 2 domain. The RING-type zinc-finger motif lies at 328-363 (CRICMDAVIDCVLLECGHMVTCTKCGKRMSECPICR).

As to quaternary structure, interacts with CASP8 and CASP10. Interacts with p53/TP53; involved in p53/TP53 ubiquitination. Interacts (via RING-type zinc finger) with MDM2; the interaction stabilizes MDM2. Interacts (via RING-type zinc finger) with PPARGC1A. Interacts with NOD1. Post-translationally, autoubiquitinated (in vitro). Proteolytically cleaved by caspases upon induction of apoptosis by TNF.

It is found in the cell membrane. It localises to the endomembrane system. Its subcellular location is the nucleus. The protein resides in the nucleus speckle. The protein localises to the cytoplasm. It is found in the cytosol. The enzyme catalyses S-ubiquitinyl-[E2 ubiquitin-conjugating enzyme]-L-cysteine + [acceptor protein]-L-lysine = [E2 ubiquitin-conjugating enzyme]-L-cysteine + N(6)-ubiquitinyl-[acceptor protein]-L-lysine.. It functions in the pathway protein modification; protein ubiquitination. Its function is as follows. E3 ubiquitin-protein ligase that regulates several biological processes through the ubiquitin-mediated proteasomal degradation of various target proteins. Ubiquitinates the caspases CASP8 and CASP10, promoting their proteasomal degradation, to negatively regulate cell death downstream of death domain receptors in the extrinsic pathway of apoptosis. May mediate 'Lys-48'-linked polyubiquitination of RIPK1 and its subsequent proteasomal degradation thereby indirectly regulating the tumor necrosis factor-mediated signaling pathway. Negatively regulates p53/TP53 through its direct ubiquitination and targeting to proteasomal degradation. Indirectly, may also negatively regulate p53/TP53 through ubiquitination and degradation of SFN. Mediates PPARGC1A proteasomal degradation probably through ubiquitination thereby indirectly regulating the metabolism of brown fat cells. Possibly involved in innate immunity, through 'Lys-48'-linked polyubiquitination of NOD1 and its subsequent proteasomal degradation. The sequence is that of E3 ubiquitin-protein ligase RNF34 (RNF34) from Bos taurus (Bovine).